We begin with the raw amino-acid sequence, 172 residues long: Protein GrpE (172 aa).

The tract at residues 1–23 (MNQDHPEFDSEDLSQNPPETDPL) is disordered.

The protein belongs to the GrpE family. Homodimer.

It is found in the cytoplasm. In terms of biological role, participates actively in the response to hyperosmotic and heat shock by preventing the aggregation of stress-denatured proteins, in association with DnaK and GrpE. It is the nucleotide exchange factor for DnaK and may function as a thermosensor. Unfolded proteins bind initially to DnaJ; upon interaction with the DnaJ-bound protein, DnaK hydrolyzes its bound ATP, resulting in the formation of a stable complex. GrpE releases ADP from DnaK; ATP binding to DnaK triggers the release of the substrate protein, thus completing the reaction cycle. Several rounds of ATP-dependent interactions between DnaJ, DnaK and GrpE are required for fully efficient folding. The sequence is that of Protein GrpE from Xanthomonas axonopodis pv. citri (strain 306).